Consider the following 518-residue polypeptide: MAPKISISLNPPYNGEFYSSNDQMSGIVSLQLTKALSIRKISVILKGFSETLTKIDQEYMFQQNGMMMPGQDNKSFHTLMKFEQRVFPPDNVWNALDGSSKPFKVKPGSYNYSFQFEKFPRKPECLKNHTAKTVAFVTRNNARLPPTFNSHWQEFNKIDNLDLYFYSFGKVIYMVQVQIELGKSSSWFKPFHKLIREIETFEFIPEPKDLIVEPDEDDNEELNAFSNNSRGNSLVTNNEFFNSSNLKVPSKDVKVVNGVGYIKSDRNFSQANSILIENGDIRSRPVSSVTSTRQSTRLVNGMKVFPSTYKMGLPDGESNMRIEVRSRDLKQIYRKDYLFRSGSQNFDKVYVVMEGNIASLSKMQITPLKLQLNLLETTTYLSQGIANGNYSSLKLIEIDLNQLKSNKPLLDLNEIRENFDGSMFECELRLKDHPILRKLVFNEEDYRHRGNRLYSFKTCTIKRIFSLQLLIEWGINGIRKQSEVNIDPVQIFCQVREHVEAEALPRYVPPPTYTEMAS.

Lys118 is covalently cross-linked (Glycyl lysine isopeptide (Lys-Gly) (interchain with G-Cter in ubiquitin)).

The protein belongs to the ART10 family. Interacts with RSP5. In terms of processing, ubiquitinated by RSP5.

The protein resides in the cytoplasm. May regulate endocytosis by recruiting RSP5 ubiquitin ligase activity to specific plasma membrane proteins in response to extracellular stimuli. This chain is Arrestin-related trafficking adapter 10 (ART10), found in Saccharomyces cerevisiae (strain Lalvin EC1118 / Prise de mousse) (Baker's yeast).